A 308-amino-acid chain; its full sequence is ATP synthase gamma chain (308 aa).

The protein belongs to the ATPase gamma chain family. As to quaternary structure, F-type ATPases have 2 components, CF(1) - the catalytic core - and CF(0) - the membrane proton channel. CF(1) has five subunits: alpha(3), beta(3), gamma(1), delta(1), epsilon(1). CF(0) has three main subunits: a, b and c.

The protein localises to the cell inner membrane. Functionally, produces ATP from ADP in the presence of a proton gradient across the membrane. The gamma chain is believed to be important in regulating ATPase activity and the flow of protons through the CF(0) complex. The protein is ATP synthase gamma chain of Bartonella tribocorum (strain CIP 105476 / IBS 506).